The primary structure comprises 380 residues: DNA replication and repair protein RecF (380 aa).

ATP is bound at residue 30-37; that stretch reads GPNGFGKT.

This sequence belongs to the RecF family.

The protein localises to the cytoplasm. The RecF protein is involved in DNA metabolism; it is required for DNA replication and normal SOS inducibility. RecF binds preferentially to single-stranded, linear DNA. It also seems to bind ATP. The chain is DNA replication and repair protein RecF from Mycobacterium sp. (strain KMS).